The following is a 5154-amino-acid chain: Hydrocephalus-inducing protein (5154 aa).

Positions 409 to 800 (MILEDSVLDP…VLLSSPSPCG (392 aa)) are interaction with KIF9. Residues 997-1009 (RPKEKQSKKEPGK) are compositionally biased toward basic and acidic residues. Disordered stretches follow at residues 997–1033 (RPKE…GNPV), 1966–1988 (ENEE…TSIS), 2193–2222 (ADSH…SPLL), 2383–2423 (KLQQ…QGAT), 2521–2572 (HTGT…KAER), and 2706–2762 (KAQE…DIDQ). Positions 1010–1024 (KGSTSSSRRQSKASQ) are enriched in low complexity. A coiled-coil region spans residues 1948-1977 (EMKKSKEEHMKAKYMENLENEEEEMNTSDQ). 2 stretches are compositionally biased toward polar residues: residues 1974–1988 (TSDQ…TSIS) and 2209–2220 (SETPQVQISSSP). A coiled-coil region spans residues 2308–2444 (YVVMKAQEKA…LKMESIERKV (137 aa)). Basic and acidic residues-rich tracts occupy residues 2383-2398 (KLQQ…DELK), 2523-2535 (GTDE…DDQR), 2548-2572 (KDRE…KAER), and 2721-2734 (KLKD…ETQK). A coiled-coil region spans residues 2543–2588 (GRKGRKDRERERLEKERAEKERLEREKAERERLEKLKALEERSDVE).

As to quaternary structure, interacts with KIF9. In terms of tissue distribution, expressed in brain and testis. Expressed in ciliated epithelial cells lining bronchi and oviduct, and in spermatocytes.

It localises to the cell projection. It is found in the cilium. The protein resides in the cytoplasm. The protein localises to the cytoskeleton. Its subcellular location is the cilium axoneme. It localises to the flagellum. Functionally, required for ciliary motility. This is Hydrocephalus-inducing protein (Hydin) from Mus musculus (Mouse).